The sequence spans 227 residues: Cytochrome c oxidase subunit 2 (227 aa).

Residues Met1–Ser14 lie on the Mitochondrial intermembrane side of the membrane. Residues Pro15–Met45 traverse the membrane as a helical segment. Over Leu46–Gln59 the chain is Mitochondrial matrix. Residues Glu60 to Met87 form a helical membrane-spanning segment. At Asp88–Leu227 the chain is on the mitochondrial intermembrane side. Cu cation contacts are provided by His161, Cys196, Glu198, Cys200, His204, and Met207. Residue Glu198 coordinates Mg(2+).

It belongs to the cytochrome c oxidase subunit 2 family. Component of the cytochrome c oxidase (complex IV, CIV), a multisubunit enzyme composed of 14 subunits. The complex is composed of a catalytic core of 3 subunits MT-CO1, MT-CO2 and MT-CO3, encoded in the mitochondrial DNA, and 11 supernumerary subunits COX4I, COX5A, COX5B, COX6A, COX6B, COX6C, COX7A, COX7B, COX7C, COX8 and NDUFA4, which are encoded in the nuclear genome. The complex exists as a monomer or a dimer and forms supercomplexes (SCs) in the inner mitochondrial membrane with NADH-ubiquinone oxidoreductase (complex I, CI) and ubiquinol-cytochrome c oxidoreductase (cytochrome b-c1 complex, complex III, CIII), resulting in different assemblies (supercomplex SCI(1)III(2)IV(1) and megacomplex MCI(2)III(2)IV(2)). Found in a complex with TMEM177, COA6, COX18, COX20, SCO1 and SCO2. Interacts with TMEM177 in a COX20-dependent manner. Interacts with COX20. Interacts with COX16. Cu cation is required as a cofactor.

It is found in the mitochondrion inner membrane. It catalyses the reaction 4 Fe(II)-[cytochrome c] + O2 + 8 H(+)(in) = 4 Fe(III)-[cytochrome c] + 2 H2O + 4 H(+)(out). Its function is as follows. Component of the cytochrome c oxidase, the last enzyme in the mitochondrial electron transport chain which drives oxidative phosphorylation. The respiratory chain contains 3 multisubunit complexes succinate dehydrogenase (complex II, CII), ubiquinol-cytochrome c oxidoreductase (cytochrome b-c1 complex, complex III, CIII) and cytochrome c oxidase (complex IV, CIV), that cooperate to transfer electrons derived from NADH and succinate to molecular oxygen, creating an electrochemical gradient over the inner membrane that drives transmembrane transport and the ATP synthase. Cytochrome c oxidase is the component of the respiratory chain that catalyzes the reduction of oxygen to water. Electrons originating from reduced cytochrome c in the intermembrane space (IMS) are transferred via the dinuclear copper A center (CU(A)) of subunit 2 and heme A of subunit 1 to the active site in subunit 1, a binuclear center (BNC) formed by heme A3 and copper B (CU(B)). The BNC reduces molecular oxygen to 2 water molecules using 4 electrons from cytochrome c in the IMS and 4 protons from the mitochondrial matrix. The protein is Cytochrome c oxidase subunit 2 (MT-CO2) of Rhinoceros unicornis (Greater Indian rhinoceros).